Reading from the N-terminus, the 684-residue chain is Probable phosphoenolpyruvate synthase (684 aa).

His-424 serves as the catalytic Tele-phosphohistidine intermediate. Substrate contacts are provided by Arg-517, Arg-564, and Glu-661. Glu-661 provides a ligand contact to Mg(2+).

The protein belongs to the PEP-utilizing enzyme family. Mg(2+) is required as a cofactor.

It catalyses the reaction pyruvate + ATP + H2O = phosphoenolpyruvate + AMP + phosphate + 2 H(+). Its pathway is carbohydrate biosynthesis; gluconeogenesis. In terms of biological role, catalyzes the phosphorylation of pyruvate to phosphoenolpyruvate. The chain is Probable phosphoenolpyruvate synthase (ppsA) from Methanothermobacter thermautotrophicus (strain ATCC 29096 / DSM 1053 / JCM 10044 / NBRC 100330 / Delta H) (Methanobacterium thermoautotrophicum).